A 717-amino-acid chain; its full sequence is Aryl hydrocarbon receptor nuclear translocator 2 (717 aa).

Disordered regions lie at residues 1–20 (MATP…PGSV) and 35–74 (MAGA…IERR). Arginine 42 carries the omega-N-methylarginine modification. The segment covering 63–73 (FSRENHSEIER) has biased composition (basic and acidic residues). Residues 63-116 (FSRENHSEIERRRRNKMTQYITELSDMVPTCSALARKPDKLTILRMAVSHMKSM) form the bHLH domain. PAS domains lie at 134-209 (TEQE…MTGR) and 323-393 (PVCM…VKLK). The region spanning 398 to 441 (SVMYRFRTKNREWMLIRTSSFTFQNPYSDEIEYIICTNTNVKQL) is the PAC domain. Residues 548 to 717 (NDIQSSSSTG…DLGMFPPFSE (170 aa)) are disordered. 2 stretches are compositionally biased toward polar residues: residues 549–574 (DIQS…QVAW) and 585–605 (QIPS…TSHT). Residues 610-625 (PSSYSPLSSPATSSPS) are compositionally biased toward low complexity. The span at 642-651 (SGQSSGQFQG) shows a compositional bias: polar residues. Residues 658–680 (SQWQSQHHGQQSGEQHSHQQPGQ) are compositionally biased toward low complexity.

In terms of assembly, efficient DNA binding requires dimerization with another bHLH protein. Heterodimer with NPAS4. Heterodimer with SIM1. Heterodimer with the aryl hydrocarbon receptor (AHR) or the SIM1 protein. Interacts with TACC3.

The protein resides in the nucleus. Its function is as follows. Transcription factor that plays a role in the development of the hypothalamo-pituitary axis, postnatal brain growth, and visual and renal function. Specifically recognizes the xenobiotic response element (XRE). This is Aryl hydrocarbon receptor nuclear translocator 2 (ARNT2) from Homo sapiens (Human).